We begin with the raw amino-acid sequence, 310 residues long: Probable RuBisCO transcriptional regulator (310 aa).

The region spanning 6–63 (FTLDQLRILKAIASEGSFKKAAESLYISQPAVSLQIQNLEKQLNIPIFDRANRKAVFT) is the HTH lysR-type domain. The H-T-H motif DNA-binding region spans 23 to 42 (FKKAAESLYISQPAVSLQIQ).

It belongs to the LysR transcriptional regulatory family.

Its subcellular location is the plastid. The protein localises to the chloroplast. Trans-acting transcriptional regulator of RuBisCO genes (rbcL and rbcS) expression. This is Probable RuBisCO transcriptional regulator (rbcR) from Guillardia theta (Cryptophyte).